Here is a 91-residue protein sequence, read N- to C-terminus: Small ribosomal subunit protein uS19m (91 aa).

It belongs to the universal ribosomal protein uS19 family. Component of the mitochondrial small ribosomal subunit (mt-SSU). Mature yeast 74S mitochondrial ribosomes consist of a small (37S) and a large (54S) subunit. The 37S small subunit contains a 15S ribosomal RNA (15S mt-rRNA) and 34 different proteins. The 54S large subunit contains a 21S rRNA (21S mt-rRNA) and 46 different proteins.

The protein resides in the mitochondrion. Functionally, component of the mitochondrial ribosome (mitoribosome), a dedicated translation machinery responsible for the synthesis of mitochondrial genome-encoded proteins, including at least some of the essential transmembrane subunits of the mitochondrial respiratory chain. The mitoribosomes are attached to the mitochondrial inner membrane and translation products are cotranslationally integrated into the membrane. This Saccharomyces cerevisiae (strain ATCC 204508 / S288c) (Baker's yeast) protein is Small ribosomal subunit protein uS19m (RSM19).